A 70-amino-acid polypeptide reads, in one-letter code: Translation initiation factor IF-1 (70 aa).

The S1-like domain occupies 1–70 (MKETNLSIKG…LTKGRIIYRH (70 aa)).

This sequence belongs to the IF-1 family. As to quaternary structure, component of the 30S ribosomal translation pre-initiation complex which assembles on the 30S ribosome in the order IF-2 and IF-3, IF-1 and N-formylmethionyl-tRNA(fMet); mRNA recruitment can occur at any time during PIC assembly.

It localises to the cytoplasm. Functionally, one of the essential components for the initiation of protein synthesis. Stabilizes the binding of IF-2 and IF-3 on the 30S subunit to which N-formylmethionyl-tRNA(fMet) subsequently binds. Helps modulate mRNA selection, yielding the 30S pre-initiation complex (PIC). Upon addition of the 50S ribosomal subunit IF-1, IF-2 and IF-3 are released leaving the mature 70S translation initiation complex. This chain is Translation initiation factor IF-1, found in Mycoplasmoides gallisepticum (strain R(low / passage 15 / clone 2)) (Mycoplasma gallisepticum).